Reading from the N-terminus, the 285-residue chain is Nudix hydrolase 15, mitochondrial (285 aa).

Residues 1–23 constitute a mitochondrion transit peptide; that stretch reads MFLLYRRLPSFARTTTTTLLCKS. At Met24 the chain carries N-acetylmethionine. Disordered stretches follow at residues 51-72 and 129-152; these read RQYKPPPSSSFDDSEEMQTDQE and THSGEVSLPGGKAEEDDKDDGMTA. One can recognise a Nudix hydrolase domain in the interval 99-255; the sequence is PKRAAVLICL…DKDYMIWGLT (157 aa). Positions 140–161 match the Nudix box motif; it reads KAEEDDKDDGMTATREAEEEIG. Mg(2+)-binding residues include Glu155 and Glu159.

The protein belongs to the Nudix hydrolase family. Requires Mg(2+) as cofactor. Mn(2+) is required as a cofactor. In terms of tissue distribution, expressed in roots, leaves, stems and inflorescences.

The protein resides in the mitochondrion. Coenzyme A diphosphatase which mediates the cleavage of oxidized CoA. Can use malonyl-CoA, hexanoyl-CoA, lauroyl-CoA, myristoyl-CoA and palmitoyl-CoA as substrates, but not isobutyryl-CoA or propionyl-CoA. In Arabidopsis thaliana (Mouse-ear cress), this protein is Nudix hydrolase 15, mitochondrial (NUDT15).